The sequence spans 326 residues: Vitamin B12 import system permease protein BtuC (326 aa).

A run of 9 helical transmembrane segments spans residues tryptophan 15–glutamate 35, leucine 61–phenylalanine 81, proline 88–glycine 108, leucine 112–leucine 132, leucine 146–phenylalanine 166, glycine 184–isoleucine 204, glycine 240–isoleucine 260, valine 274–alanine 294, and glutamate 302–leucine 322.

Belongs to the binding-protein-dependent transport system permease family. FecCD subfamily. The complex is composed of two ATP-binding proteins (BtuD), two transmembrane proteins (BtuC) and a solute-binding protein (BtuF).

Its subcellular location is the cell inner membrane. Its function is as follows. Part of the ABC transporter complex BtuCDF involved in vitamin B12 import. Involved in the translocation of the substrate across the membrane. This is Vitamin B12 import system permease protein BtuC from Escherichia coli O9:H4 (strain HS).